The primary structure comprises 289 residues: MYB transcription factor 69 (289 aa).

HTH myb-type domains follow at residues 9-61 and 62-116; these read KAGV…TNYL and RPGI…KKKL. DNA-binding regions (H-T-H motif) lie at residues 37–61 and 89–112; these read WRAV…TNYL and WAAI…NTHL. Disordered stretches follow at residues 127–162 and 225–252; these read APPR…ADST and SSAI…QQQQ. Positions 139-154 are enriched in basic and acidic residues; it reads ADCRRHDMTRSSKDSH.

Mainly expressed in highly lignified tissues such as vascular tissues.

Its subcellular location is the nucleus. Functionally, transcription factor that binds to the promoter of MYB31 and MYB42 and activates directly their expression, thus repressing lignin biosynthesis. The chain is MYB transcription factor 69 from Zea mays (Maize).